The primary structure comprises 117 residues: Large ribosomal subunit protein bL20 (117 aa).

The protein belongs to the bacterial ribosomal protein bL20 family.

Binds directly to 23S ribosomal RNA and is necessary for the in vitro assembly process of the 50S ribosomal subunit. It is not involved in the protein synthesizing functions of that subunit. This Neorickettsia sennetsu (strain ATCC VR-367 / Miyayama) (Ehrlichia sennetsu) protein is Large ribosomal subunit protein bL20.